A 140-amino-acid polypeptide reads, in one-letter code: Callisulfakinin (140 aa).

A signal peptide spans 1 to 30; the sequence is MYSQQRIFNSKYFIFFIAVLSIFWLPTMSA. The propeptide occupies 31–109; it reads RNLENSKNEN…LEYEDEDRSK (79 aa). The residue at position 114 (tyrosine 114) is a Sulfotyrosine. Phenylalanine 119 carries the phenylalanine amide modification. Tyrosine 131 is modified (sulfotyrosine). Phenylalanine 136 bears the Phenylalanine amide mark. Positions 139–140 are excised as a propeptide; it reads SI.

This sequence belongs to the gastrin/cholecystokinin family. As to expression, in brain, it is specifically expressed in four pairs of neurons. Not expressed in other cells of the brain and in the thoracico-abdominal ganglion.

The protein resides in the secreted. Its function is as follows. Callisulfakinin I is a neuropeptide. The existence of Callisulfakinin II is uncertain. The sequence is that of Callisulfakinin from Calliphora vomitoria (Blue bottle fly).